The primary structure comprises 78 residues: Probable Vpr-like protein (78 aa).

Positions 35–43 match the Nuclear export signal motif; it reads AIRLLQGLF. The Nuclear localization signal motif lies at 45–54; that stretch reads RYRFKKPRVD.

The protein resides in the virion. It is found in the host nucleus. Its function is as follows. Seems to function as a Vpr-like protein, since it mediates host cell cycle arrest in G2 phase. Cell cycle arrest creates a favorable environment for maximizing viral expression and production. The chain is Probable Vpr-like protein from Feline immunodeficiency virus (isolate Petaluma) (FIV).